A 411-amino-acid chain; its full sequence is MSDSVILALGIAAFTVIVLVLVAIILFAKSKLVDSGDITIGINDDPEKAITLPAGSKLLGALASKGIFVSSACGGGGSCGQCIVKVKNGGGEILPTELSHINKREAKEGYRLACQVNVKGNMEVELPEEIFGVKKWECTVISNDNKATFIKELKLAIPEGEEVPFRAGGYIQIEAEPHVVNYKDFDIPEEYHEDWDKYDLWRYVSKVDEHIIRAYSMASYPEEKGIIMLNVRIATPPPRQPDAPPGQMSSYIWSLKAGDKVTISGPFGEFFAKETDAEMVFIGGGAGMAPMRSHIFDQLKRLHSKRKMSFWYGARSKREIFYQEDFDQLQAENPNFVWHVALSDALPEDNWTGYTGFIHNVLYENYLKNHEAPEDCEYYMCGPPVMNAAVIKMLKDLGVEDENILLDDFGG.

The helical transmembrane segment at Val-5–Ile-25 threads the bilayer. The 95-residue stretch at Gly-36 to Ile-130 folds into the 2Fe-2S ferredoxin-type domain. Residues Cys-73, Cys-79, Cys-82, and Cys-114 each contribute to the [2Fe-2S] cluster site. Residues Val-133 to Lys-273 form the FAD-binding FR-type domain.

It belongs to the NqrF family. Composed of six subunits; NqrA, NqrB, NqrC, NqrD, NqrE and NqrF. [2Fe-2S] cluster serves as cofactor. FAD is required as a cofactor.

It localises to the cell inner membrane. The enzyme catalyses a ubiquinone + n Na(+)(in) + NADH + H(+) = a ubiquinol + n Na(+)(out) + NAD(+). In terms of biological role, NQR complex catalyzes the reduction of ubiquinone-1 to ubiquinol by two successive reactions, coupled with the transport of Na(+) ions from the cytoplasm to the periplasm. The first step is catalyzed by NqrF, which accepts electrons from NADH and reduces ubiquinone-1 to ubisemiquinone by a one-electron transfer pathway. This Haemophilus influenzae (strain PittEE) protein is Na(+)-translocating NADH-quinone reductase subunit F.